The following is a 547-amino-acid chain: 4-coumarate-CoA ligase 1 (547 aa).

Residues 190-194 (SSGTT), H238, 310-312 (AAP), 332-333 (QG), T337, D421, R436, and K527 contribute to the ATP site. Positions 263-332 (EIVRLMELVE…EKLPNAKLGQ (70 aa)) are SBD1. Residues 333-400 (GYGMTEAGPV…IRGNQIMKGY (68 aa)) form an SBD2 region.

It belongs to the ATP-dependent AMP-binding enzyme family. As to expression, mostly expressed in stems, and, to a lower extent, in bulbs.

The enzyme catalyses (E)-4-coumarate + ATP + CoA = (E)-4-coumaroyl-CoA + AMP + diphosphate. The protein operates within phytoalexin biosynthesis; 3,4',5-trihydroxystilbene biosynthesis; 3,4',5-trihydroxystilbene from trans-4-coumarate: step 1/2. Functionally, produces CoA thioesters of a variety of hydroxy- and methoxy-substituted cinnamic acids, which are used to synthesize several phenylpropanoid-derived compounds, including anthocyanins, flavonoids, isoflavonoids, coumarins, lignin, suberin and wall-bound phenolics. In Narcissus pseudonarcissus (Daffodil), this protein is 4-coumarate-CoA ligase 1.